The primary structure comprises 72 residues: Omega-conotoxin-like S6.6 (72 aa).

Positions methionine 1 to alanine 22 are cleaved as a signal peptide. The propeptide occupies aspartate 23–arginine 45. Intrachain disulfides connect cysteine 46-cysteine 61, cysteine 53-cysteine 65, and cysteine 60-cysteine 71. Residue cysteine 71 is modified to Cysteine amide.

This sequence belongs to the conotoxin O1 superfamily. Expressed by the venom duct.

Its subcellular location is the secreted. Omega-conotoxins act at presynaptic membranes, they bind and block voltage-gated calcium channels (Cav). This toxin blocks N-, P- and Q-type calcium channels. The sequence is that of Omega-conotoxin-like S6.6 from Conus striatus (Striated cone).